Reading from the N-terminus, the 40-residue chain is Photosystem II reaction center protein J (40 aa).

The helical transmembrane segment at 8–28 (IPLWIIGTVAGILVIGLVGIF) threads the bilayer.

The protein belongs to the PsbJ family. PSII is composed of 1 copy each of membrane proteins PsbA, PsbB, PsbC, PsbD, PsbE, PsbF, PsbH, PsbI, PsbJ, PsbK, PsbL, PsbM, PsbT, PsbX, PsbY, PsbZ, Psb30/Ycf12, at least 3 peripheral proteins of the oxygen-evolving complex and a large number of cofactors. It forms dimeric complexes.

Its subcellular location is the plastid. It is found in the chloroplast thylakoid membrane. One of the components of the core complex of photosystem II (PSII). PSII is a light-driven water:plastoquinone oxidoreductase that uses light energy to abstract electrons from H(2)O, generating O(2) and a proton gradient subsequently used for ATP formation. It consists of a core antenna complex that captures photons, and an electron transfer chain that converts photonic excitation into a charge separation. The protein is Photosystem II reaction center protein J of Spinacia oleracea (Spinach).